The chain runs to 250 residues: mRNA-decapping protein g5R (250 aa).

In terms of domain architecture, Nudix hydrolase spans 97–239 (QKFRKNWLLP…NLEPMIGPAF (143 aa)). Residues 132-153 (GKPKEDESDLTCAIREFEEETG) carry the Nudix box motif. Glu-138 contacts Mg(2+). The active-site Nucleophile is the Glu-147. Positions 151 and 173 each coordinate Mg(2+).

It belongs to the Nudix hydrolase family. DIPP subfamily. Interacts with host RPL23A. Requires Mg(2+) as cofactor. It depends on Mn(2+) as a cofactor.

Its subcellular location is the host rough endoplasmic reticulum. The catalysed reaction is diphospho-myo-inositol polyphosphate + H2O = myo-inositol polyphosphate + phosphate.. Its function is as follows. Decapping enzyme required for the removal of the 5'-end m7GpppN cap tethered to viral and host mRNAs to allow their decay in cells. May therefore accelerate viral and cellular mRNA turnover to eliminate competing host mRNAs and allow stage-specific synthesis of viral proteins. Acceleration of the turnover of cellular transcripts may even promote the shutoff of host protein synthesis. In addition to the mRNA cap, g5R also efficiently hydrolyzes diphosphoinositol polyphosphates. Down-regulation of the level of PP-InsP5 (diphosphoinositol pentakisphosphate) may play a role in viral manipulation of the cellular secretory pathway, a step necessary for the formation of virions. Binds viral and cellular poly(A) mRNAs, thereby decreasing both types of mRNAs. In Ornithodoros (relapsing fever ticks), this protein is mRNA-decapping protein g5R.